The sequence spans 219 residues: Interleukin-6 (219 aa).

A signal peptide spans 1-20 (MNSSTRYLSLLSALVVLVKG). The cysteines at positions 103 and 111 are disulfide-linked.

The protein belongs to the IL-6 superfamily. As to quaternary structure, component of a hexamer of two molecules each of IL6, IL6R and IL6ST; first binds to IL6R to associate with the signaling subunit IL6ST. In terms of tissue distribution, expressed in spleen, gill and gastrointestinal tract, ovary and brain. Highest expression in ovary.

The protein resides in the secreted. Cytokine with a wide variety of biological functions in immunity, tissue regeneration, and metabolism. Binds to IL6R, then the complex associates to the signaling subunit IL6ST/gp130 to trigger the intracellular IL6-signaling pathway. The interaction with the membrane-bound IL6R and IL6ST stimulates 'classic signaling', whereas the binding of IL6 and soluble IL6R to IL6ST stimulates 'trans-signaling'. Alternatively, 'cluster signaling' occurs when membrane-bound IL6:IL6R complexes on transmitter cells activate IL6ST receptors on neighboring receiver cells. The protein is Interleukin-6 (il6) of Oncorhynchus mykiss (Rainbow trout).